The chain runs to 470 residues: Ubiquitin carboxyl-terminal hydrolase calypso (470 aa).

Residues 43-274 (GWLELESDPG…IRFNLMAVVP (232 aa)) form the UCH catalytic domain. Cysteine 129 functions as the Nucleophile in the catalytic mechanism. The active-site Proton donor is histidine 211. The disordered stretch occupies residues 305-324 (DEQGEGGNGDPQRPDTPSTL). A ULD domain is found at 373–401 (NYDKFICTFLSMLAHQGVLGELVSQHLLP). The segment at 403-470 (KKISGQSAAN…KGRNKCKKRK (68 aa)) is positively charged C-terminal tail required for binding nucleosomes. Positions 422–451 (ANAGATAAGAAGAAPKSQQQQAAAAKNGKS) are enriched in low complexity. A disordered region spans residues 422-470 (ANAGATAAGAAGAAPKSQQQQAAAAKNGKSPSKTPGRRRKGRNKCKKRK). Basic residues predominate over residues 456-470 (PGRRRKGRNKCKKRK).

It belongs to the peptidase C12 family. BAP1 subfamily. As to quaternary structure, catalytic component of the polycomb repressive deubiquitinase (PR-DUB) complex, at least composed of caly/calypso, Asx and sba (MBD5/6 homolog). The PR-DUB complex associates with nucleosomes to mediate deubiquitination of histone H2AK118ub1 substrates; the association requires the positively charged C-terminal tail of caly, probably due to direct binding of DNA. Interacts (via ULD domain) with Asx (via DEUBAD domain); the interaction produces a stable heterodimer with a composite binding site for ubiquitin. Homodimerizes (via coiled-coil hinge-region between the UCH and ULD domains) to mediate assembly of 2 copies of the caly-Asx heterodimer into a bisymmetric tetramer; dimerization enhances PR-DUB association with nucleosomes.

It is found in the nucleus. It carries out the reaction Thiol-dependent hydrolysis of ester, thioester, amide, peptide and isopeptide bonds formed by the C-terminal Gly of ubiquitin (a 76-residue protein attached to proteins as an intracellular targeting signal).. Its function is as follows. Catalytic component of the polycomb repressive deubiquitinase (PR-DUB) complex, a complex that specifically mediates deubiquitination of histone H2A monoubiquitinated at 'Lys-119' (H2AK118ub1). Mediates bisymmetric organization of the PR-DUB complex and is involved in association with nucleosomes to mediate deubiquitination. Does not deubiquitinate monoubiquitinated histone H2B. Required to maintain the transcriptionally repressive state of homeotic genes throughout development. The PR-DUB complex has weak or no activity toward 'Lys-48'- and 'Lys-63'-linked polyubiquitin chains. Polycomb group (PcG) protein. The protein is Ubiquitin carboxyl-terminal hydrolase calypso of Drosophila ananassae (Fruit fly).